Consider the following 315-residue polypeptide: Calumenin (315 aa).

Positions 1–19 (MDLRQFLLCLSLCTAFALS) are cleaved as a signal peptide. Tyrosine 47 carries the phosphotyrosine modification. The residue at position 65 (threonine 65) is a Phosphothreonine. EF-hand domains follow at residues 68-103 (ESKE…AQKR), 104-139 (WIHE…YVLD), 151-186 (QMMV…DEYD), 188-223 (MKDI…HDGN), 229-264 (WVKT…SDYD), and 265-300 (HAEA…FVGS). At serine 69 the chain carries Phosphoserine. Positions 81, 83, 85, 92, 117, 119, 121, and 128 each coordinate Ca(2+). The N-linked (GlcNAc...) asparagine glycan is linked to asparagine 131. A Ca(2+)-binding site is contributed by aspartate 164. At lysine 165 the chain carries N6-acetyllysine. Aspartate 166, aspartate 168, glutamate 175, aspartate 201, asparagine 203, aspartate 205, glutamate 212, aspartate 242, asparagine 244, aspartate 246, arginine 248, and glutamate 253 together coordinate Ca(2+). Residue threonine 254 is modified to Phosphothreonine. Phosphoserine occurs at positions 261 and 277. Ca(2+)-binding residues include aspartate 278, asparagine 280, aspartate 282, lysine 284, and glutamate 289. The short motif at 312–315 (HDEF) is the Prevents secretion from ER element.

The protein belongs to the CREC family. In terms of assembly, interacts with GGCX.

Its subcellular location is the endoplasmic reticulum membrane. It is found in the golgi apparatus. It localises to the secreted. The protein resides in the melanosome. The protein localises to the sarcoplasmic reticulum lumen. In terms of biological role, involved in regulation of vitamin K-dependent carboxylation of multiple N-terminal glutamate residues. Seems to inhibit gamma-carboxylase GGCX. Binds 7 calcium ions with a low affinity. In Mesocricetus auratus (Golden hamster), this protein is Calumenin (CALU).